The chain runs to 193 residues: NADH-quinone oxidoreductase subunit B (193 aa).

[4Fe-4S] cluster is bound by residues Cys72, Cys73, Cys137, and Cys167.

Belongs to the complex I 20 kDa subunit family. NDH-1 is composed of 14 different subunits. Subunits NuoB, C, D, E, F, and G constitute the peripheral sector of the complex. [4Fe-4S] cluster serves as cofactor.

The protein resides in the cell inner membrane. The catalysed reaction is a quinone + NADH + 5 H(+)(in) = a quinol + NAD(+) + 4 H(+)(out). In terms of biological role, NDH-1 shuttles electrons from NADH, via FMN and iron-sulfur (Fe-S) centers, to quinones in the respiratory chain. The immediate electron acceptor for the enzyme in this species is believed to be ubiquinone. Couples the redox reaction to proton translocation (for every two electrons transferred, four hydrogen ions are translocated across the cytoplasmic membrane), and thus conserves the redox energy in a proton gradient. This Phenylobacterium zucineum (strain HLK1) protein is NADH-quinone oxidoreductase subunit B.